Consider the following 222-residue polypeptide: UPF0758 protein YicR (222 aa).

The MPN domain occupies 100–222; it reads PLLSPEMTRE…YVSFAERGWI (123 aa). Histidine 171, histidine 173, and aspartate 184 together coordinate Zn(2+). A JAMM motif motif is present at residues 171 to 184; that stretch reads HNHPSGCAEPSKAD.

It belongs to the UPF0758 family. YicR subfamily.

In Escherichia coli (strain K12 / MC4100 / BW2952), this protein is UPF0758 protein YicR.